The chain runs to 149 residues: Deoxyuridine 5'-triphosphate nucleotidohydrolase (149 aa).

Substrate-binding positions include 68 to 70, asparagine 81, 85 to 87, and methionine 95; these read RSG and LID.

The protein belongs to the dUTPase family. Requires Mg(2+) as cofactor.

It carries out the reaction dUTP + H2O = dUMP + diphosphate + H(+). It participates in pyrimidine metabolism; dUMP biosynthesis; dUMP from dCTP (dUTP route): step 2/2. This enzyme is involved in nucleotide metabolism: it produces dUMP, the immediate precursor of thymidine nucleotides and it decreases the intracellular concentration of dUTP so that uracil cannot be incorporated into DNA. The protein is Deoxyuridine 5'-triphosphate nucleotidohydrolase of Herminiimonas arsenicoxydans.